We begin with the raw amino-acid sequence, 78 residues long: Beta-defensin 105 (78 aa).

The N-terminal stretch at 1 to 27 (MALIRKTFYFLFAMFFILVQLPSGCQA) is a signal peptide. 3 cysteine pairs are disulfide-bonded: Cys43–Cys74, Cys53–Cys67, and Cys57–Cys73.

Belongs to the beta-defensin family. As to expression, specifically expressed in testis.

The protein resides in the secreted. Functionally, has antibacterial activity. This Homo sapiens (Human) protein is Beta-defensin 105 (DEFB105A).